The primary structure comprises 127 residues: UPF0738 protein Bsph_1225 (127 aa).

Belongs to the UPF0738 family.

This Lysinibacillus sphaericus (strain C3-41) protein is UPF0738 protein Bsph_1225.